Here is an 85-residue protein sequence, read N- to C-terminus: Large ribosomal subunit protein bL27 (85 aa).

The tract at residues 1-20 is disordered; the sequence is MAHKKAAGSSRNGRDSNPKM.

It belongs to the bacterial ribosomal protein bL27 family.

This Psychrobacter arcticus (strain DSM 17307 / VKM B-2377 / 273-4) protein is Large ribosomal subunit protein bL27.